Consider the following 103-residue polypeptide: Large ribosomal subunit protein bL21 (103 aa).

This sequence belongs to the bacterial ribosomal protein bL21 family. As to quaternary structure, part of the 50S ribosomal subunit. Contacts protein L20.

Functionally, this protein binds to 23S rRNA in the presence of protein L20. This Bordetella petrii (strain ATCC BAA-461 / DSM 12804 / CCUG 43448) protein is Large ribosomal subunit protein bL21.